The primary structure comprises 322 residues: Extracellular metalloprotease AFUB_008060 (322 aa).

An N-terminal signal peptide occupies residues 1-22 (MLPFNSCVYVLLIISLMSNCRA). 2 N-linked (GlcNAc...) asparagine glycosylation sites follow: Asn-123 and Asn-197. Residue His-233 coordinates Zn(2+). Glu-234 is a catalytic residue. A Zn(2+)-binding site is contributed by His-237. A disulfide bond links Cys-272 and Cys-299.

It belongs to the peptidase M43B family.

Its subcellular location is the secreted. Secreted metalloproteinase that allows assimilation of proteinaceous substrates. Plays a pivotal role as a pathogenicity determinant during infections and contributes to the ability of the pathogen to persist within the mammalian host. The polypeptide is Extracellular metalloprotease AFUB_008060 (Aspergillus fumigatus (strain CBS 144.89 / FGSC A1163 / CEA10) (Neosartorya fumigata)).